Reading from the N-terminus, the 495-residue chain is Ferruginol synthase (495 aa).

Position 1 (Met1) is a topological domain, lumenal. A helical membrane pass occupies residues Asp2–Phe22. The Cytoplasmic portion of the chain corresponds to Arg23–Ser495. Cys437 provides a ligand contact to heme.

This sequence belongs to the cytochrome P450 family. The cofactor is heme. As to expression, expression is more abundant in the rhizome.

The protein localises to the endoplasmic reticulum membrane. The enzyme catalyses abieta-8,11,13-triene + reduced [NADPH--hemoprotein reductase] + O2 = ferruginol + oxidized [NADPH--hemoprotein reductase] + H2O + H(+). In terms of biological role, cytochrome P450 enzyme (CYP) which catalyzes a unique two-electron oxidation cascade on abieta-8,11,13-triene to produce ferruginol, an intermediate in tanshinone biosynthesis. In Salvia miltiorrhiza (Chinese sage), this protein is Ferruginol synthase.